The primary structure comprises 549 residues: Undecaprenyl phosphate-alpha-4-amino-4-deoxy-L-arabinose arabinosyl transferase (549 aa).

Transmembrane regions (helical) follow at residues 9 to 29 (LLLIAFGLFYLVPLSNHGLWI), 80 to 100 (LFGVRIASVVATALSVLLAYL), 112 to 132 (SLACALLYASFGLIAGQSGYA), 136 to 156 (PQFTFWVNLSLVALWYALDAG), 176 to 196 (FLTKGFLAWLLPVLVALPYML), 204 to 224 (LLGYGALAVLVALLVCLPWAL), 256 to 276 (PWWFYLPLLAVACLPWSGLLP), 288 to 308 (QPPVAFLALWLLLPLAFFSLS), 312 to 332 (LPTYIMPCLLPLALLMGHALV), 346 to 366 (NGLLNLGLALLALAALAYLQL), 376 to 396 (FELFLVLLVIGAWAAAGLAQW), and 402 to 422 (AWAAPLLASWVLIALLPAAMP).

It belongs to the glycosyltransferase 83 family.

Its subcellular location is the cell inner membrane. The catalysed reaction is 4-amino-4-deoxy-alpha-L-arabinopyranosyl di-trans,octa-cis-undecaprenyl phosphate + lipid IVA = lipid IIA + di-trans,octa-cis-undecaprenyl phosphate.. The protein operates within lipopolysaccharide metabolism; 4-amino-4-deoxy-beta-L-arabinose-lipid A biosynthesis. Its function is as follows. Catalyzes the transfer of the L-Ara4N moiety of the glycolipid undecaprenyl phosphate-alpha-L-Ara4N to lipid A. The modified arabinose is attached to lipid A and is required for resistance to polymyxin and cationic antimicrobial peptides. The protein is Undecaprenyl phosphate-alpha-4-amino-4-deoxy-L-arabinose arabinosyl transferase of Pseudomonas paraeruginosa (strain DSM 24068 / PA7) (Pseudomonas aeruginosa (strain PA7)).